The sequence spans 278 residues: Protein EXORDIUM-like 4 (278 aa).

Positions 1–23 (MAYNYRFAILLVLLSATVGFTAA) are cleaved as a signal peptide. A glycan (N-linked (GlcNAc...) asparagine) is linked at N35.

The protein belongs to the EXORDIUM family.

It localises to the secreted. The protein localises to the extracellular space. The protein resides in the apoplast. Functionally, may play a role in a brassinosteroid-dependent regulation of growth and development. This is Protein EXORDIUM-like 4 (EXL4) from Arabidopsis thaliana (Mouse-ear cress).